Here is a 39-residue protein sequence, read N- to C-terminus: Cytochrome b559 subunit beta (39 aa).

Residues 14–30 traverse the membrane as a helical segment; it reads WLAVHGLAVPTVFFLGS. Residue histidine 18 coordinates heme.

This sequence belongs to the PsbE/PsbF family. As to quaternary structure, heterodimer of an alpha subunit and a beta subunit. PSII is composed of 1 copy each of membrane proteins PsbA, PsbB, PsbC, PsbD, PsbE, PsbF, PsbH, PsbI, PsbJ, PsbK, PsbL, PsbM, PsbT, PsbX, PsbY, PsbZ, Psb30/Ycf12, at least 3 peripheral proteins of the oxygen-evolving complex and a large number of cofactors. It forms dimeric complexes. Requires heme b as cofactor.

It is found in the plastid. The protein localises to the chloroplast thylakoid membrane. This b-type cytochrome is tightly associated with the reaction center of photosystem II (PSII). PSII is a light-driven water:plastoquinone oxidoreductase that uses light energy to abstract electrons from H(2)O, generating O(2) and a proton gradient subsequently used for ATP formation. It consists of a core antenna complex that captures photons, and an electron transfer chain that converts photonic excitation into a charge separation. The polypeptide is Cytochrome b559 subunit beta (Cedrus deodara (Deodar cedar)).